The sequence spans 86 residues: Apolipoprotein C-I (86 aa).

Residues Met-1–Gly-26 form the signal peptide.

This sequence belongs to the apolipoprotein C1 family.

Its subcellular location is the secreted. In terms of biological role, inhibitor of lipoprotein binding to the low density lipoprotein (LDL) receptor, LDL receptor-related protein, and very low density lipoprotein (VLDL) receptor. Associates with high density lipoproteins (HDL) and the triacylglycerol-rich lipoproteins in the plasma and makes up about 10% of the protein of the VLDL and 2% of that of HDL. Appears to interfere directly with fatty acid uptake and is also the major plasma inhibitor of cholesteryl ester transfer protein (CETP). Binds free fatty acids and reduces their intracellular esterification. Modulates the interaction of APOE with beta-migrating VLDL and inhibits binding of beta-VLDL to the LDL receptor-related protein. This is Apolipoprotein C-I (APOC1) from Saimiri boliviensis boliviensis (Bolivian squirrel monkey).